Here is a 146-residue protein sequence, read N- to C-terminus: 3-hydroxyacyl-[acyl-carrier-protein] dehydratase FabZ (146 aa).

His49 is a catalytic residue.

Belongs to the thioester dehydratase family. FabZ subfamily.

Its subcellular location is the cytoplasm. The enzyme catalyses a (3R)-hydroxyacyl-[ACP] = a (2E)-enoyl-[ACP] + H2O. In terms of biological role, involved in unsaturated fatty acids biosynthesis. Catalyzes the dehydration of short chain beta-hydroxyacyl-ACPs and long chain saturated and unsaturated beta-hydroxyacyl-ACPs. In Pseudomonas entomophila (strain L48), this protein is 3-hydroxyacyl-[acyl-carrier-protein] dehydratase FabZ.